The chain runs to 432 residues: D-amino acid dehydrogenase (432 aa).

3–17 (VLVLGSGVVGTASAY) is an FAD binding site.

This sequence belongs to the DadA oxidoreductase family. It depends on FAD as a cofactor.

It catalyses the reaction a D-alpha-amino acid + A + H2O = a 2-oxocarboxylate + AH2 + NH4(+). The protein operates within amino-acid degradation; D-alanine degradation; NH(3) and pyruvate from D-alanine: step 1/1. Functionally, oxidative deamination of D-amino acids. This is D-amino acid dehydrogenase from Stutzerimonas stutzeri (strain A1501) (Pseudomonas stutzeri).